A 146-amino-acid polypeptide reads, in one-letter code: Large ribosomal subunit protein uL15 (146 aa).

Residues 1 to 13 (MKLHELKPAEGSR) are compositionally biased toward basic and acidic residues. The segment at 1–59 (MKLHELKPAEGSRKVRNRVGRGTSSGNGKTSGRGQKGQKARSGGGVRLGFEGGQTPLFR) is disordered. Gly residues-rich tracts occupy residues 23-35 (TSSG…GRGQ) and 42-52 (SGGGVRLGFEG).

It belongs to the universal ribosomal protein uL15 family. In terms of assembly, part of the 50S ribosomal subunit.

In terms of biological role, binds to the 23S rRNA. The sequence is that of Large ribosomal subunit protein uL15 from Streptococcus agalactiae serotype Ia (strain ATCC 27591 / A909 / CDC SS700).